The sequence spans 269 residues: Shikimate dehydrogenase (NADP(+)) (269 aa).

Residues 22–24 and Thr-68 each bind shikimate; that span reads TLS. The active-site Proton acceptor is the Lys-72. Residues Asn-93 and Asp-104 each coordinate shikimate. NADP(+) contacts are provided by residues 128–132, 152–157, and Phe-210; these read GAGGA and NRTNLR. Tyr-212 contacts shikimate. Residue Gly-233 coordinates NADP(+).

It belongs to the shikimate dehydrogenase family. Homodimer.

It catalyses the reaction shikimate + NADP(+) = 3-dehydroshikimate + NADPH + H(+). The protein operates within metabolic intermediate biosynthesis; chorismate biosynthesis; chorismate from D-erythrose 4-phosphate and phosphoenolpyruvate: step 4/7. In terms of biological role, involved in the biosynthesis of the chorismate, which leads to the biosynthesis of aromatic amino acids. Catalyzes the reversible NADPH linked reduction of 3-dehydroshikimate (DHSA) to yield shikimate (SA). In Saccharolobus islandicus (strain L.S.2.15 / Lassen #1) (Sulfolobus islandicus), this protein is Shikimate dehydrogenase (NADP(+)).